The chain runs to 192 residues: Adenylate kinase (192 aa).

Residue G10–T18 participates in ATP binding.

The protein belongs to the archaeal adenylate kinase family. As to quaternary structure, monomer.

It is found in the cytoplasm. It carries out the reaction AMP + ATP = 2 ADP. The polypeptide is Adenylate kinase (adkA) (Methanotorris igneus (Methanococcus igneus)).